Reading from the N-terminus, the 131-residue chain is Small ribosomal subunit protein uS8 (131 aa).

This sequence belongs to the universal ribosomal protein uS8 family. Part of the 30S ribosomal subunit. Contacts proteins S5 and S12.

In terms of biological role, one of the primary rRNA binding proteins, it binds directly to 16S rRNA central domain where it helps coordinate assembly of the platform of the 30S subunit. This is Small ribosomal subunit protein uS8 from Nautilia profundicola (strain ATCC BAA-1463 / DSM 18972 / AmH).